The sequence spans 339 residues: Probable scoulerine-9-O-methyltransferase OMT3B (339 aa).

Methionine 161 is an S-adenosyl-L-methionine binding site. A substrate-binding site is contributed by aspartate 164. S-adenosyl-L-methionine-binding positions include threonine 165, glycine 191, aspartate 214, 228–229 (DV), and lysine 242. 243–247 (SILHE) is a binding site for substrate. Histidine 246 acts as the Proton acceptor in catalysis.

It belongs to the class I-like SAM-binding methyltransferase superfamily. Cation-independent O-methyltransferase family. COMT subfamily.

It catalyses the reaction (S)-scoulerine + S-adenosyl-L-methionine = (S)-tetrahydrocolumbamine + S-adenosyl-L-homocysteine + H(+). The protein operates within alkaloid biosynthesis. In terms of biological role, methyltransferase involved in the biosynthesis of the benzylisoquinoline alkaloid noscapine. Catalyzes the conversion of (S)-scoulerine to (S)-tetrahydrocolumbamine. The polypeptide is Probable scoulerine-9-O-methyltransferase OMT3B (Papaver somniferum (Opium poppy)).